A 296-amino-acid polypeptide reads, in one-letter code: Urease accessory protein UreD (296 aa).

This sequence belongs to the UreD family. UreD, UreF and UreG form a complex that acts as a GTP-hydrolysis-dependent molecular chaperone, activating the urease apoprotein by helping to assemble the nickel containing metallocenter of UreC. The UreE protein probably delivers the nickel.

The protein localises to the cytoplasm. Functionally, required for maturation of urease via the functional incorporation of the urease nickel metallocenter. In Methylibium petroleiphilum (strain ATCC BAA-1232 / LMG 22953 / PM1), this protein is Urease accessory protein UreD.